A 127-amino-acid chain; its full sequence is Large ribosomal subunit protein bL12 (127 aa).

The interval 93 to 127 (LVDEAPNPVSEGVSREEADDLKAQIEDAGGEVELQ) is disordered. Basic and acidic residues predominate over residues 105–117 (VSREEADDLKAQI).

The protein belongs to the bacterial ribosomal protein bL12 family. In terms of assembly, homodimer. Part of the ribosomal stalk of the 50S ribosomal subunit. Forms a multimeric L10(L12)X complex, where L10 forms an elongated spine to which 2 to 4 L12 dimers bind in a sequential fashion. Binds GTP-bound translation factors.

In terms of biological role, forms part of the ribosomal stalk which helps the ribosome interact with GTP-bound translation factors. Is thus essential for accurate translation. In Salinibacter ruber (strain DSM 13855 / M31), this protein is Large ribosomal subunit protein bL12.